Consider the following 358-residue polypeptide: Feruloyl CoA ortho-hydroxylase F6H1-1 (358 aa).

A Fe2OG dioxygenase domain is found at 200 to 308 (TKESLLMGSK…RISVPIFVNP (109 aa)). Tyr-216 serves as a coordination point for 2-oxoglutarate. Fe cation is bound by residues His-231, Asp-233, and His-289. 2-oxoglutarate is bound by residues Arg-299 and Ser-301.

This sequence belongs to the iron/ascorbate-dependent oxidoreductase family. It depends on L-ascorbate as a cofactor. The cofactor is Fe(2+).

It carries out the reaction (E)-feruloyl-CoA + 2-oxoglutarate + O2 = (E)-6-hydroxyferuloyl-CoA + succinate + CO2. The protein operates within phenylpropanoid metabolism. Functionally, 2-oxoglutarate (OG)- and Fe(II)-dependent dioxygenase (2OGD) involved in scopoletin biosynthesis. Converts feruloyl CoA into 6'-hydroxyferuloyl CoA. The sequence is that of Feruloyl CoA ortho-hydroxylase F6H1-1 from Ipomoea batatas (Sweet potato).